The following is a 621-amino-acid chain: Glutathione-regulated potassium-efflux system protein KefC (621 aa).

The next 12 membrane-spanning stretches (helical) occupy residues 4 to 24, 26 to 46, 54 to 74, 90 to 110, 114 to 134, 149 to 169, 178 to 198, 218 to 238, 270 to 290, 294 to 314, 326 to 346, and 359 to 379; these read HTLIQALIYLGAAALIVPIAV, LGLGSVLGYLIAGCIIGPWGL, AILHFAEIGVVLMLFVIGLEL, GALQMVACGVLIGLFCMLLGL, VAELIGMTLALSSTAIAMQAM, FAVLLFQDIAAIPLVAMIPLL, LVAFALSALKVAAALALVVAL, VFSAVALFLVFGFGLLLEEVG, GLLLGLFFIGVGMSIDFGTLV, LRIVILLVGFLAIKMLMLWLI, RWFAVLLGQGSEFAFVVFGAA, and ALTLAVALSMAATPVLLVLLT. Residues 399-518 enclose the RCK N-terminal domain; it reads QPRVIVAGFG…AGVEAPERET (120 aa). A disordered region spans residues 598–621; that stretch reads GWQGTEEGRHTGDIADEPENKPSA.

The protein belongs to the monovalent cation:proton antiporter 2 (CPA2) transporter (TC 2.A.37) family. KefC subfamily. As to quaternary structure, homodimer. Interacts with the regulatory subunit KefF.

The protein localises to the cell inner membrane. Its function is as follows. Pore-forming subunit of a potassium efflux system that confers protection against electrophiles. Catalyzes K(+)/H(+) antiport. The polypeptide is Glutathione-regulated potassium-efflux system protein KefC (Klebsiella pneumoniae (strain 342)).